We begin with the raw amino-acid sequence, 499 residues long: Apolipoprotein N-acyltransferase (499 aa).

6 consecutive transmembrane segments (helical) span residues 9-29, 50-70, 77-97, 114-134, 148-168, and 183-203; these read LLLGLLSGLVFAPTFLLPALL, LGYIFGFGHFLSGIYWISIGV, FWWAIPFALFGLPIILAFFVS, FIFCLYWVLFEWVRSWIFTGL, ILIQSLNIIGIYGLSFIVIYI, and LKVLLLTSSITLAVIITYGSV. Residues 220–464 enclose the CN hydrolase domain; sequence VQPSIPQTEK…DGLIPKKLDS (245 aa). Glu259 acts as the Proton acceptor in catalysis. The active site involves Lys322. Catalysis depends on Cys372, which acts as the Nucleophile. The chain crosses the membrane as a helical span at residues 466-486; the sequence is TIFSKFGNITILLIVFFIFLV.

This sequence belongs to the CN hydrolase family. Apolipoprotein N-acyltransferase subfamily.

It is found in the cell inner membrane. The catalysed reaction is N-terminal S-1,2-diacyl-sn-glyceryl-L-cysteinyl-[lipoprotein] + a glycerophospholipid = N-acyl-S-1,2-diacyl-sn-glyceryl-L-cysteinyl-[lipoprotein] + a 2-acyl-sn-glycero-3-phospholipid + H(+). Its pathway is protein modification; lipoprotein biosynthesis (N-acyl transfer). In terms of biological role, catalyzes the phospholipid dependent N-acylation of the N-terminal cysteine of apolipoprotein, the last step in lipoprotein maturation. The protein is Apolipoprotein N-acyltransferase of Rickettsia bellii (strain RML369-C).